Reading from the N-terminus, the 540-residue chain is Early growth response protein 1 (540 aa).

Disordered stretches follow at residues 1–105 (MAAA…AESF) and 162–240 (VSMT…PAYP). Over residues 64-75 (SSGGGGGGGGGS) the composition is skewed to gly residues. Residues 167–190 (PPATSSSASSPAASSSASQSPPLS) show a composition bias toward low complexity. The segment covering 192–201 (AVQSNDSSPI) has biased composition (polar residues). A Glycyl lysine isopeptide (Lys-Gly) (interchain with G-Cter in SUMO2) cross-link involves residue Lys304. Positions 317 to 337 (PSRMRKYPNRPSKTPPHERPY) are disordered. The C2H2-type 1 zinc finger occupies 337–361 (YACPVESCDRRFSRSDELTRHIRIH). A C2H2-type 2; degenerate zinc finger spans residues 366–388 (PQCRISMRNFSRSDHLTTHIRTH). Residues 394 to 416 (FACDICGRKFARSDERKRHTKIH) form a C2H2-type 3 zinc finger. Residues 407–482 (DERKRHTKIH…SPGSSTYPSP (76 aa)) form a disordered region. Residues 411–421 (RHTKIHLRQKD) show a composition bias toward basic residues. The segment covering 427 to 482 (SAASAATSSLPSYPSPVATSYPSPATTSYPSPATTSYPSPVPTSYSSPGSSTYPSP) has biased composition (low complexity).

It belongs to the EGR C2H2-type zinc-finger protein family. Interacts with SNAI1 and SP1 upon 12-O-tetradecanoylphorbol-13-acetate (TPA) induction.

It is found in the nucleus. It localises to the cytoplasm. In terms of biological role, transcriptional regulator. Recognizes and binds to the DNA sequence 5'-GCG(T/G)GGGCG-3'(EGR-site) in the promoter region of target genes. Binds double-stranded target DNA, irrespective of the cytosine methylation status. Regulates the transcription of numerous target genes, and thereby plays an important role in regulating the response to growth factors, DNA damage, and ischemia. Plays a role in the regulation of cell survival, proliferation and cell death. Activates expression of p53/TP53 and TGFB1, and thereby helps prevent tumor formation. Required for normal progress through mitosis and normal proliferation of hepatocytes after partial hepatectomy. Mediates responses to ischemia and hypoxia; regulates the expression of proteins such as IL1B and CXCL2 that are involved in inflammatory processes and development of tissue damage after ischemia. Regulates biosynthesis of luteinizing hormone (LHB) in the pituitary. Regulates the amplitude of the expression rhythms of clock genes: BMAL1, PER2 and NR1D1 in the liver via the activation of PER1 (clock repressor) transcription. Regulates the rhythmic expression of core-clock gene BMAL1 in the suprachiasmatic nucleus (SCN). This chain is Early growth response protein 1 (EGR1), found in Bos taurus (Bovine).